Here is a 260-residue protein sequence, read N- to C-terminus: Adenosylcobinamide-GDP ribazoletransferase (260 aa).

7 consecutive transmembrane segments (helical) span residues 31–51 (FYFLPLIGGLIAGLVLIPIYF), 57–77 (IEISGFISLLLYLFLTGSIHL), 108–128 (YGTIGLNVFLLLRYINYSTII), 131–151 (AGLLILAGIISRLSGLAVVVF), 173–193 (FFFWLVLVCFLSLFTPEIAAF), 206–226 (LKYLLLPLTAFILTFIIIRIS), and 240–260 (LIVELTELAVLSTSFFINVHL).

This sequence belongs to the CobS family. The cofactor is Mg(2+).

The protein localises to the cell inner membrane. It catalyses the reaction alpha-ribazole + adenosylcob(III)inamide-GDP = adenosylcob(III)alamin + GMP + H(+). It carries out the reaction alpha-ribazole 5'-phosphate + adenosylcob(III)inamide-GDP = adenosylcob(III)alamin 5'-phosphate + GMP + H(+). The protein operates within cofactor biosynthesis; adenosylcobalamin biosynthesis; adenosylcobalamin from cob(II)yrinate a,c-diamide: step 7/7. Joins adenosylcobinamide-GDP and alpha-ribazole to generate adenosylcobalamin (Ado-cobalamin). Also synthesizes adenosylcobalamin 5'-phosphate from adenosylcobinamide-GDP and alpha-ribazole 5'-phosphate. This Treponema denticola (strain ATCC 35405 / DSM 14222 / CIP 103919 / JCM 8153 / KCTC 15104) protein is Adenosylcobinamide-GDP ribazoletransferase.